The following is a 576-amino-acid chain: Sulfite reductase [NADPH] hemoprotein beta-component (576 aa).

[4Fe-4S] cluster-binding residues include Cys-435, Cys-441, Cys-480, and Cys-484. A siroheme-binding site is contributed by Cys-484.

Belongs to the nitrite and sulfite reductase 4Fe-4S domain family. As to quaternary structure, alpha(8)-beta(8). The alpha component is a flavoprotein, the beta component is a hemoprotein. Siroheme serves as cofactor. [4Fe-4S] cluster is required as a cofactor.

It catalyses the reaction hydrogen sulfide + 3 NADP(+) + 3 H2O = sulfite + 3 NADPH + 4 H(+). The protein operates within sulfur metabolism; hydrogen sulfide biosynthesis; hydrogen sulfide from sulfite (NADPH route): step 1/1. Component of the sulfite reductase complex that catalyzes the 6-electron reduction of sulfite to sulfide. This is one of several activities required for the biosynthesis of L-cysteine from sulfate. The sequence is that of Sulfite reductase [NADPH] hemoprotein beta-component from Yersinia pestis bv. Antiqua (strain Antiqua).